Reading from the N-terminus, the 616-residue chain is MPQYRSRTSTHGRNMAGARALWRATGMKEDDFQKPIIAIANSFTQFVPGHVHLKDLGQLVAREIERAGGVAKEFNTIAVDDGIAMGHSGMLYSLPSRDLIADAVEYMVSAHCADALVCISNCDKITPGMLMAALRLNIPVVFVSGGPMEAGKVNWQGNMHKLDLVDAMVAAADSNVSDAESEAIERSACPTCGSCSGMFTANSMNCLTEALGLSLPGNGSTLATHAARKELFLKAGRLIVEITKRYYEQDDESVLPRSIANFKAFENAMSLDVAMGGSTNTVLHLLAAAHEAEVDFTMADIDRISRGVPCICKVAPATAKYHMEDVHRAGGVMAILSELSRAGLIHRDTPTVHSPTLGEALDKWDIMTTNDEDVKKFYRAAPGGISTTIAFSQSMLWPDLDTDRKEGCIRDKDHAYSQDGGLAVLYGNIALDGCIVKTAGVDDSILKFTGRARIFESQDDAVAAILADKIEAGDIVIIRYEGPRGGPGMQEMLYPTSYLKSKGLGKACALLTDGRFSGGTSGLSIGHASPEAAEGGAIGLVEENDIIEIDIPNRTIHLAVKDEVLAHRRAAMEARGKDAWKPVNRQRHISVALRAYAAMSTSAAKGAVRDVSQIEK.

D81 is a binding site for Mg(2+). C122 lines the [2Fe-2S] cluster pocket. Mg(2+) contacts are provided by D123 and K124. Residue K124 is modified to N6-carboxylysine. C195 contacts [2Fe-2S] cluster. A Mg(2+)-binding site is contributed by E491. S517 functions as the Proton acceptor in the catalytic mechanism.

Belongs to the IlvD/Edd family. As to quaternary structure, homodimer. [2Fe-2S] cluster serves as cofactor. The cofactor is Mg(2+).

The catalysed reaction is (2R)-2,3-dihydroxy-3-methylbutanoate = 3-methyl-2-oxobutanoate + H2O. It catalyses the reaction (2R,3R)-2,3-dihydroxy-3-methylpentanoate = (S)-3-methyl-2-oxopentanoate + H2O. It functions in the pathway amino-acid biosynthesis; L-isoleucine biosynthesis; L-isoleucine from 2-oxobutanoate: step 3/4. The protein operates within amino-acid biosynthesis; L-valine biosynthesis; L-valine from pyruvate: step 3/4. In terms of biological role, functions in the biosynthesis of branched-chain amino acids. Catalyzes the dehydration of (2R,3R)-2,3-dihydroxy-3-methylpentanoate (2,3-dihydroxy-3-methylvalerate) into 2-oxo-3-methylpentanoate (2-oxo-3-methylvalerate) and of (2R)-2,3-dihydroxy-3-methylbutanoate (2,3-dihydroxyisovalerate) into 2-oxo-3-methylbutanoate (2-oxoisovalerate), the penultimate precursor to L-isoleucine and L-valine, respectively. This Methylobacillus flagellatus (strain ATCC 51484 / DSM 6875 / VKM B-1610 / KT) protein is Dihydroxy-acid dehydratase.